The sequence spans 372 residues: MNLSEISYRRVVVKLGTSVLTSGSLKLDKAHMVELARQMACLMKAGVEVVLCTSGAIAAGKEHLGYPQLPDTIASKQLLAAVGQSQLILAWSQLFSIYGLHVGQLLLTRADLHDRERYLNARDSLNALLNNGIIPIINENDAVATAEIKVGDNDNLSARAALLCDADLLILLTDQKGLFDADPRKNPDAKLITEVQNIDDSLRMLAGGAVSGLGTGGMATKLEAADIARRAGVEVVIASGHHKDVIQNVVCAKPVGTHFTALEHPLESRKQWILAGPKARGQVVLDTGAITAVTQKGRSLLSKGIIEVNGLFQRGDTIELVDTKGKVYAKGMSRYGSLDVSKIAGKHSDNIEEILGYDYGDAVVHRNDMVVL.

Residue K14 coordinates ATP. Residues S54, D141, and N153 each coordinate substrate. ATP-binding positions include 173–174 (TD) and 215–221 (TGGMATK). The region spanning 280-358 (RGQVVLDTGA…DNIEEILGYD (79 aa)) is the PUA domain.

Belongs to the glutamate 5-kinase family.

Its subcellular location is the cytoplasm. It catalyses the reaction L-glutamate + ATP = L-glutamyl 5-phosphate + ADP. Its pathway is amino-acid biosynthesis; L-proline biosynthesis; L-glutamate 5-semialdehyde from L-glutamate: step 1/2. Its function is as follows. Catalyzes the transfer of a phosphate group to glutamate to form L-glutamate 5-phosphate. The protein is Glutamate 5-kinase of Shewanella halifaxensis (strain HAW-EB4).